Here is a 312-residue protein sequence, read N- to C-terminus: uncharacterized protein (312 aa).

Catalysis depends on charge relay system residues Ser200, Asp261, and His292.

It belongs to the AB hydrolase superfamily. AB hydrolase 2 family.

This is an uncharacterized protein from Acanthamoeba polyphaga mimivirus (APMV).